The primary structure comprises 49 residues: Small, acid-soluble spore protein O (49 aa).

The segment at 24–49 is disordered; the sequence is GYNEEFSNEPLTEAQRQNNKKRKKNQ.

This sequence belongs to the SspO family.

Its subcellular location is the spore core. This Geobacillus kaustophilus (strain HTA426) protein is Small, acid-soluble spore protein O.